A 263-amino-acid chain; its full sequence is Tropinone reductase homolog At2g29300 (263 aa).

13-37 provides a ligand contact to NADP(+); the sequence is LVTGAASGIGYAIVEELAGFGARIH. Position 146 (serine 146) interacts with substrate. Tyrosine 160 (proton acceptor) is an active-site residue.

It belongs to the short-chain dehydrogenases/reductases (SDR) family. SDR65C subfamily.

This is Tropinone reductase homolog At2g29300 from Arabidopsis thaliana (Mouse-ear cress).